Here is a 194-residue protein sequence, read N- to C-terminus: MQVILLERVAKLGQMGEVVKVKDGFARNFLLPQGKALRASDANIQAFEARKAELASRNDETRAEAEKIAEKLDGQTFVIIRSASDAGALYGSVTPRDAADVAIAEGFAVERRQVVLTAPIKELGLHEVRVHLHPEVDVTIKLNVARSAEEAELQASGKSIQELAAEEEAAAEFEIAELFDDIGSAGRDEDEAAN.

This sequence belongs to the bacterial ribosomal protein bL9 family.

Its function is as follows. Binds to the 23S rRNA. The chain is Large ribosomal subunit protein bL9 from Paracoccus denitrificans (strain Pd 1222).